A 521-amino-acid chain; its full sequence is Bifunctional purine biosynthesis protein PurH (521 aa).

The MGS-like domain maps to 1 to 145 (MIKQALISVS…KNHRDVTVVV (145 aa)).

The protein belongs to the PurH family.

It carries out the reaction (6R)-10-formyltetrahydrofolate + 5-amino-1-(5-phospho-beta-D-ribosyl)imidazole-4-carboxamide = 5-formamido-1-(5-phospho-D-ribosyl)imidazole-4-carboxamide + (6S)-5,6,7,8-tetrahydrofolate. It catalyses the reaction IMP + H2O = 5-formamido-1-(5-phospho-D-ribosyl)imidazole-4-carboxamide. The protein operates within purine metabolism; IMP biosynthesis via de novo pathway; 5-formamido-1-(5-phospho-D-ribosyl)imidazole-4-carboxamide from 5-amino-1-(5-phospho-D-ribosyl)imidazole-4-carboxamide (10-formyl THF route): step 1/1. It participates in purine metabolism; IMP biosynthesis via de novo pathway; IMP from 5-formamido-1-(5-phospho-D-ribosyl)imidazole-4-carboxamide: step 1/1. This chain is Bifunctional purine biosynthesis protein PurH, found in Burkholderia lata (strain ATCC 17760 / DSM 23089 / LMG 22485 / NCIMB 9086 / R18194 / 383).